A 320-amino-acid chain; its full sequence is Cytochrome f (320 aa).

An N-terminal signal peptide occupies residues 1 to 35 (MQTRNTFSWIREEITRSISVSLIIYIITRASISSA). Heme is bound by residues Tyr36, Cys56, Cys59, and His60. Residues 286 to 306 (VQGLLFFLASVVLAQIFLVLK) traverse the membrane as a helical segment.

This sequence belongs to the cytochrome f family. In terms of assembly, the 4 large subunits of the cytochrome b6-f complex are cytochrome b6, subunit IV (17 kDa polypeptide, petD), cytochrome f and the Rieske protein, while the 4 small subunits are PetG, PetL, PetM and PetN. The complex functions as a dimer. It depends on heme as a cofactor.

Its subcellular location is the plastid. It localises to the chloroplast thylakoid membrane. Its function is as follows. Component of the cytochrome b6-f complex, which mediates electron transfer between photosystem II (PSII) and photosystem I (PSI), cyclic electron flow around PSI, and state transitions. This is Cytochrome f from Draba nemorosa (Woodland whitlowgrass).